Consider the following 192-residue polypeptide: Cell division protein SepF (192 aa).

The segment at 15–70 is disordered; it reads GDPLEYEEDGEEYEQVYREENKREEARRATAGTAAAATPTAAAQASDAAPMGSGPA. The segment covering 18–28 has biased composition (acidic residues); that stretch reads LEYEEDGEEYE. Positions 29–42 are enriched in basic and acidic residues; that stretch reads QVYREENKREEARR. The span at 43 to 63 shows a compositional bias: low complexity; sequence ATAGTAAAATPTAAAQASDAA.

Belongs to the SepF family. In terms of assembly, homodimer. Interacts with FtsZ.

The protein resides in the cytoplasm. Its function is as follows. Cell division protein that is part of the divisome complex and is recruited early to the Z-ring. Probably stimulates Z-ring formation, perhaps through the cross-linking of FtsZ protofilaments. Its function overlaps with FtsA. The polypeptide is Cell division protein SepF (Gloeobacter violaceus (strain ATCC 29082 / PCC 7421)).